A 504-amino-acid chain; its full sequence is MTEQKYIVALDQGTTSSRAVILDHDANIVSVSQREFTQIYPQAGWVEHDPLEIYATQSSTLVETLAKAGIRSDQIAAIGITNQRETTIVWNKETGKPVYNAIVWQCRRTADTCEKLKEAGLEEYIRENTGLVVDPYFSGTKIKWILDNVEGAREDAEAGKLLFGTVDTWLVWKMTQGRVHVTDYTNASRTMVFNINTLQWDEKLLKELDIPLSMMPEVKSSSEVYGETNIGGKGGTRIPIAGIAGDQQAALYGQMCVEQGQAKNTYGTGCFLLMNTGKEKVTSRNGLLTTLACGPRGEASYALEGAVFMGGASIQWLRDEMKLLADAKDSEYFATKVDSSNGVYVVPAFTGLGAPYWDAYARGTIVGLTRGCGSNHIIRATLESIAYQTRDVIDAMQADSGIKLSALRVDGGAVANNFLMQFQADVLDVAVHRPQVTEVTALGAAYLAGLAVGFWGGLDELAGKAVIDRSFEPHHDEIKRNQRYRGWKRAVKCAQSWAELHDEE.

Position 14 (Thr14) interacts with ADP. Residues Thr14, Thr15, and Ser16 each coordinate ATP. Thr14 is a binding site for sn-glycerol 3-phosphate. Arg18 contacts ADP. Sn-glycerol 3-phosphate contacts are provided by Arg84, Glu85, Tyr136, and Asp246. Glycerol-binding residues include Arg84, Glu85, Tyr136, Asp246, and Gln247. The ADP site is built by Thr268 and Gly311. ATP-binding residues include Thr268, Gly311, Gln315, and Gly412. Positions 412 and 416 each coordinate ADP.

It belongs to the FGGY kinase family.

It catalyses the reaction glycerol + ATP = sn-glycerol 3-phosphate + ADP + H(+). It participates in polyol metabolism; glycerol degradation via glycerol kinase pathway; sn-glycerol 3-phosphate from glycerol: step 1/1. Inhibited by fructose 1,6-bisphosphate (FBP). Its function is as follows. Key enzyme in the regulation of glycerol uptake and metabolism. Catalyzes the phosphorylation of glycerol to yield sn-glycerol 3-phosphate. In Aliivibrio salmonicida (strain LFI1238) (Vibrio salmonicida (strain LFI1238)), this protein is Glycerol kinase.